A 422-amino-acid chain; its full sequence is Phytoene synthase 1, chloroplastic (422 aa).

Residues Met-1–Ser-70 constitute a chloroplast transit peptide.

Belongs to the phytoene/squalene synthase family. In terms of assembly, monomer. Interacts with OR. Interacts with ORLIKE.

Its subcellular location is the plastid. It is found in the chloroplast membrane. It catalyses the reaction 2 (2E,6E,10E)-geranylgeranyl diphosphate = 15-cis-phytoene + 2 diphosphate. It participates in carotenoid biosynthesis; phytoene biosynthesis; all-trans-phytoene from geranylgeranyl diphosphate: step 1/1. Its function is as follows. Catalyzes the reaction from prephytoene diphosphate to phytoene. This Arabidopsis thaliana (Mouse-ear cress) protein is Phytoene synthase 1, chloroplastic.